Here is a 90-residue protein sequence, read N- to C-terminus: uncharacterized protein (90 aa).

The interval 13-34 is disordered; that stretch reads APEGMGPHHAASSSHHSAQHHH. Residues 52 to 72 form a helical membrane-spanning segment; that stretch reads YKMWFLYALILALIFGVFMWW.

It is found in the host membrane. This is an uncharacterized protein from Invertebrate iridescent virus 3 (IIV-3).